Consider the following 550-residue polypeptide: CTP synthase (550 aa).

An amidoligase domain region spans residues Met-1–Leu-272. Ser-14 contributes to the CTP binding site. A UTP-binding site is contributed by Ser-14. Ser-15–Leu-20 provides a ligand contact to ATP. Tyr-55 lines the L-glutamine pocket. Asp-72 serves as a coordination point for ATP. Residues Asp-72 and Glu-146 each coordinate Mg(2+). Residues Asp-153–Glu-155, Lys-193–Gln-198, and Lys-229 contribute to the CTP site. Residues Lys-193–Gln-198 and Lys-229 contribute to the UTP site. The 254-residue stretch at Thr-297–Gln-550 folds into the Glutamine amidotransferase type-1 domain. Residue Gly-359 coordinates L-glutamine. Cys-386 acts as the Nucleophile; for glutamine hydrolysis in catalysis. L-glutamine is bound by residues Leu-387 to Gln-390, Glu-410, and Arg-478. Catalysis depends on residues His-523 and Glu-525.

This sequence belongs to the CTP synthase family. In terms of assembly, homotetramer.

The catalysed reaction is UTP + L-glutamine + ATP + H2O = CTP + L-glutamate + ADP + phosphate + 2 H(+). The enzyme catalyses L-glutamine + H2O = L-glutamate + NH4(+). It catalyses the reaction UTP + NH4(+) + ATP = CTP + ADP + phosphate + 2 H(+). It participates in pyrimidine metabolism; CTP biosynthesis via de novo pathway; CTP from UDP: step 2/2. With respect to regulation, allosterically activated by GTP, when glutamine is the substrate; GTP has no effect on the reaction when ammonia is the substrate. The allosteric effector GTP functions by stabilizing the protein conformation that binds the tetrahedral intermediate(s) formed during glutamine hydrolysis. Inhibited by the product CTP, via allosteric rather than competitive inhibition. Catalyzes the ATP-dependent amination of UTP to CTP with either L-glutamine or ammonia as the source of nitrogen. Regulates intracellular CTP levels through interactions with the four ribonucleotide triphosphates. In Lawsonia intracellularis (strain PHE/MN1-00), this protein is CTP synthase.